The sequence spans 425 residues: tRNA(Ile)-lysidine synthase (425 aa).

27 to 32 (SGGLDS) provides a ligand contact to ATP.

It belongs to the tRNA(Ile)-lysidine synthase family.

The protein resides in the cytoplasm. The enzyme catalyses cytidine(34) in tRNA(Ile2) + L-lysine + ATP = lysidine(34) in tRNA(Ile2) + AMP + diphosphate + H(+). Functionally, ligates lysine onto the cytidine present at position 34 of the AUA codon-specific tRNA(Ile) that contains the anticodon CAU, in an ATP-dependent manner. Cytidine is converted to lysidine, thus changing the amino acid specificity of the tRNA from methionine to isoleucine. In Streptococcus gordonii (strain Challis / ATCC 35105 / BCRC 15272 / CH1 / DL1 / V288), this protein is tRNA(Ile)-lysidine synthase.